A 273-amino-acid polypeptide reads, in one-letter code: Putative methyltransferase Cher3 (273 aa).

One can recognise a CheR-type methyltransferase domain in the interval 1–273; the sequence is MTSERNTDIE…VKPQRIFRKS (273 aa). Residues Ser-76, Arg-80, Glu-114, Asp-137, 199–200, and 215–216 contribute to the S-adenosyl-L-methionine site; these read SL and RN.

In Pseudomonas putida (strain ATCC 47054 / DSM 6125 / CFBP 8728 / NCIMB 11950 / KT2440), this protein is Putative methyltransferase Cher3 (cheR3).